Here is a 1172-residue protein sequence, read N- to C-terminus: Putative cadmium/zinc-transporting ATPase HMA4 (1172 aa).

The Cytoplasmic segment spans residues 1–93 (MALQNKEEEK…VRVNGETSFK (93 aa)). The HMA domain maps to 17 to 83 (QKSYFDVLGI…ALNEARLEAN (67 aa)). The helical transmembrane segment at 94–115 (NKWPSPFAVVSGLLLLLSFLKF) threads the bilayer. At 116-118 (VYS) the chain is on the extracellular side. The helical transmembrane segment at 119-138 (PLRWLAVAAVAAGIYPILAK) threads the bilayer. Topologically, residues 139-145 (AFASIKR) are cytoplasmic. A helical membrane pass occupies residues 146–166 (PRIDINILVIITVIATLAMQD). Residue F167 is a topological domain, extracellular. Residues 168 to 188 (MEAAAVVFLFTISDWLETRAS) form a helical membrane-spanning segment. The Cytoplasmic segment spans residues 189–314 (YKATSVMQSL…KTKSQRLIDK (126 aa)). Residues 315 to 337 (CSQYYTPAIILVSACVAIVPVIM) traverse the membrane as a helical segment. At 338-345 (KVHNLKHW) the chain is on the extracellular side. Residues 346–363 (FHLALVVLVSGCPCGLIL) form a helical membrane-spanning segment. Residues 364 to 656 (STPVATFCAL…KLARRARRKV (293 aa)) lie on the Cytoplasmic side of the membrane. The active-site 4-aspartylphosphate intermediate is D401. Positions 601 and 605 each coordinate Mg(2+). Residues 657–676 (VENVCLSIILKAGILALAFA) form a helical membrane-spanning segment. The Extracellular portion of the chain corresponds to 677–680 (GHPL). The chain crosses the membrane as a helical span at residues 681 to 700 (IWAAVLVDVGTCLLVIFNSM). Topologically, residues 701–1172 (LLLREKKKIG…HHHHHHHVSA (472 aa)) are cytoplasmic.

It belongs to the cation transport ATPase (P-type) (TC 3.A.3) family. Type IB subfamily.

It localises to the membrane. The catalysed reaction is Zn(2+)(in) + ATP + H2O = Zn(2+)(out) + ADP + phosphate + H(+). The enzyme catalyses Cd(2+)(in) + ATP + H2O = Cd(2+)(out) + ADP + phosphate + H(+). Functionally, involved in cadmium/zinc transport. This chain is Putative cadmium/zinc-transporting ATPase HMA4 (HMA4), found in Arabidopsis thaliana (Mouse-ear cress).